Reading from the N-terminus, the 270-residue chain is Tryptophan synthase alpha chain (270 aa).

Catalysis depends on proton acceptor residues E49 and D60.

Belongs to the TrpA family. As to quaternary structure, tetramer of two alpha and two beta chains.

It carries out the reaction (1S,2R)-1-C-(indol-3-yl)glycerol 3-phosphate + L-serine = D-glyceraldehyde 3-phosphate + L-tryptophan + H2O. It functions in the pathway amino-acid biosynthesis; L-tryptophan biosynthesis; L-tryptophan from chorismate: step 5/5. In terms of biological role, the alpha subunit is responsible for the aldol cleavage of indoleglycerol phosphate to indole and glyceraldehyde 3-phosphate. In Thermobifida fusca (strain YX), this protein is Tryptophan synthase alpha chain.